Reading from the N-terminus, the 351-residue chain is Phosphate acyltransferase (351 aa).

It belongs to the PlsX family. As to quaternary structure, homodimer. Probably interacts with PlsY.

The protein resides in the cytoplasm. The catalysed reaction is a fatty acyl-[ACP] + phosphate = an acyl phosphate + holo-[ACP]. Its pathway is lipid metabolism; phospholipid metabolism. In terms of biological role, catalyzes the reversible formation of acyl-phosphate (acyl-PO(4)) from acyl-[acyl-carrier-protein] (acyl-ACP). This enzyme utilizes acyl-ACP as fatty acyl donor, but not acyl-CoA. This is Phosphate acyltransferase from Gloeothece citriformis (strain PCC 7424) (Cyanothece sp. (strain PCC 7424)).